We begin with the raw amino-acid sequence, 99 residues long: Plastocyanin (99 aa).

Residues 1–99 (IEVLLGSDDG…AGMVGKVTVN (99 aa)) form the Plastocyanin-like domain. His-37, Cys-84, His-87, and Met-92 together coordinate Cu cation.

Belongs to the plastocyanin family. It depends on Cu(2+) as a cofactor.

Its subcellular location is the plastid. It localises to the chloroplast thylakoid membrane. Functionally, participates in electron transfer between P700 and the cytochrome b6-f complex in photosystem I. This Solanum crispum (Chilean potato-tree) protein is Plastocyanin (PETE).